The sequence spans 306 residues: Pyridoxal 5'-phosphate synthase subunit PdxS (306 aa).

Asp-36 is a D-ribose 5-phosphate binding site. The active-site Schiff-base intermediate with D-ribose 5-phosphate is Lys-93. A D-ribose 5-phosphate-binding site is contributed by Gly-165. D-glyceraldehyde 3-phosphate is bound at residue Arg-177. D-ribose 5-phosphate contacts are provided by residues Gly-226 and Gly-247–Ser-248.

The protein belongs to the PdxS/SNZ family. In the presence of PdxT, forms a dodecamer of heterodimers.

It catalyses the reaction aldehydo-D-ribose 5-phosphate + D-glyceraldehyde 3-phosphate + L-glutamine = pyridoxal 5'-phosphate + L-glutamate + phosphate + 3 H2O + H(+). It functions in the pathway cofactor biosynthesis; pyridoxal 5'-phosphate biosynthesis. In terms of biological role, catalyzes the formation of pyridoxal 5'-phosphate from ribose 5-phosphate (RBP), glyceraldehyde 3-phosphate (G3P) and ammonia. The ammonia is provided by the PdxT subunit. Can also use ribulose 5-phosphate and dihydroxyacetone phosphate as substrates, resulting from enzyme-catalyzed isomerization of RBP and G3P, respectively. This is Pyridoxal 5'-phosphate synthase subunit PdxS from Salinispora tropica (strain ATCC BAA-916 / DSM 44818 / JCM 13857 / NBRC 105044 / CNB-440).